A 446-amino-acid polypeptide reads, in one-letter code: tRNA modification GTPase MnmE (446 aa).

Positions 24, 81, and 120 each coordinate (6S)-5-formyl-5,6,7,8-tetrahydrofolate. Positions 216-368 (GLHAVLIGPP…LHIRLRELAL (153 aa)) constitute a TrmE-type G domain. Asn226 is a binding site for K(+). Residues 226 to 231 (NAGKSS), 245 to 251 (TDVAGTT), and 270 to 273 (DTAG) contribute to the GTP site. A Mg(2+)-binding site is contributed by Ser230. 3 residues coordinate K(+): Thr245, Val247, and Thr250. Thr251 serves as a coordination point for Mg(2+). Lys446 contacts (6S)-5-formyl-5,6,7,8-tetrahydrofolate.

This sequence belongs to the TRAFAC class TrmE-Era-EngA-EngB-Septin-like GTPase superfamily. TrmE GTPase family. In terms of assembly, homodimer. Heterotetramer of two MnmE and two MnmG subunits. Requires K(+) as cofactor.

It localises to the cytoplasm. Its function is as follows. Exhibits a very high intrinsic GTPase hydrolysis rate. Involved in the addition of a carboxymethylaminomethyl (cmnm) group at the wobble position (U34) of certain tRNAs, forming tRNA-cmnm(5)s(2)U34. The sequence is that of tRNA modification GTPase MnmE from Xanthomonas oryzae pv. oryzae (strain MAFF 311018).